The primary structure comprises 473 residues: Chromosomal replication initiator protein DnaA (473 aa).

The tract at residues Met1–Gln73 is domain I, interacts with DnaA modulators. The tract at residues Gln73–Ser129 is domain II. Residues Pro130–Ser352 form a domain III, AAA+ region region. Residues Gly177, Gly179, Lys180, and Thr181 each coordinate ATP. A domain IV, binds dsDNA region spans residues Lys353–Glu473.

The protein belongs to the DnaA family. In terms of assembly, oligomerizes as a right-handed, spiral filament on DNA at oriC.

The protein resides in the cytoplasm. Plays an essential role in the initiation and regulation of chromosomal replication. ATP-DnaA binds to the origin of replication (oriC) to initiate formation of the DNA replication initiation complex once per cell cycle. Binds the DnaA box (a 9 base pair repeat at the origin) and separates the double-stranded (ds)DNA. Forms a right-handed helical filament on oriC DNA; dsDNA binds to the exterior of the filament while single-stranded (ss)DNA is stabiized in the filament's interior. The ATP-DnaA-oriC complex binds and stabilizes one strand of the AT-rich DNA unwinding element (DUE), permitting loading of DNA polymerase. After initiation quickly degrades to an ADP-DnaA complex that is not apt for DNA replication. Binds acidic phospholipids. This is Chromosomal replication initiator protein DnaA from Rhodopseudomonas palustris (strain BisB18).